Consider the following 300-residue polypeptide: tRNA-cytidine(32) 2-sulfurtransferase (300 aa).

Residues 57 to 62 (SGGKDS) carry the PP-loop motif motif. Residues Cys-132, Cys-135, and Cys-223 each coordinate [4Fe-4S] cluster.

This sequence belongs to the TtcA family. Homodimer. Mg(2+) is required as a cofactor. The cofactor is [4Fe-4S] cluster.

It localises to the cytoplasm. The catalysed reaction is cytidine(32) in tRNA + S-sulfanyl-L-cysteinyl-[cysteine desulfurase] + AH2 + ATP = 2-thiocytidine(32) in tRNA + L-cysteinyl-[cysteine desulfurase] + A + AMP + diphosphate + H(+). It participates in tRNA modification. Its function is as follows. Catalyzes the ATP-dependent 2-thiolation of cytidine in position 32 of tRNA, to form 2-thiocytidine (s(2)C32). The sulfur atoms are provided by the cysteine/cysteine desulfurase (IscS) system. This Xanthomonas campestris pv. campestris (strain 8004) protein is tRNA-cytidine(32) 2-sulfurtransferase.